The chain runs to 761 residues: 5-methyltetrahydropteroyltriglutamate--homocysteine methyltransferase (761 aa).

Residues 16-19 and K118 each bind 5-methyltetrahydropteroyltri-L-glutamate; that span reads RELK. L-homocysteine-binding positions include 436–438 and E489; that span reads IGS. Residues 436–438 and E489 contribute to the L-methionine site; that span reads IGS. 5-methyltetrahydropteroyltri-L-glutamate is bound by residues 520-521 and W566; that span reads RC. Residue D604 participates in L-homocysteine binding. D604 is a binding site for L-methionine. E610 serves as a coordination point for 5-methyltetrahydropteroyltri-L-glutamate. Zn(2+) is bound by residues H646, C648, and E670. H699 acts as the Proton donor in catalysis. A Zn(2+)-binding site is contributed by C731.

It belongs to the vitamin-B12 independent methionine synthase family. Zn(2+) serves as cofactor.

It catalyses the reaction 5-methyltetrahydropteroyltri-L-glutamate + L-homocysteine = tetrahydropteroyltri-L-glutamate + L-methionine. Its pathway is amino-acid biosynthesis; L-methionine biosynthesis via de novo pathway; L-methionine from L-homocysteine (MetE route): step 1/1. In terms of biological role, catalyzes the transfer of a methyl group from 5-methyltetrahydrofolate to homocysteine resulting in methionine formation. This is 5-methyltetrahydropteroyltriglutamate--homocysteine methyltransferase from Vibrio cholerae serotype O1 (strain ATCC 39315 / El Tor Inaba N16961).